The sequence spans 435 residues: 5-methylthioadenosine/S-adenosylhomocysteine deaminase (435 aa).

Residues His-65 and His-67 each coordinate Zn(2+). 3 residues coordinate substrate: Glu-94, Arg-150, and His-189. Position 216 (His-216) interacts with Zn(2+). Substrate is bound by residues Glu-219 and Asp-304. Residue Asp-304 coordinates Zn(2+).

The protein belongs to the metallo-dependent hydrolases superfamily. MTA/SAH deaminase family. Zn(2+) serves as cofactor.

The catalysed reaction is S-adenosyl-L-homocysteine + H2O + H(+) = S-inosyl-L-homocysteine + NH4(+). It carries out the reaction S-methyl-5'-thioadenosine + H2O + H(+) = S-methyl-5'-thioinosine + NH4(+). In terms of biological role, catalyzes the deamination of 5-methylthioadenosine and S-adenosyl-L-homocysteine into 5-methylthioinosine and S-inosyl-L-homocysteine, respectively. Is also able to deaminate adenosine. The sequence is that of 5-methylthioadenosine/S-adenosylhomocysteine deaminase from Bacillus anthracis (strain A0248).